Reading from the N-terminus, the 92-residue chain is C-C motif chemokine 4 (92 aa).

The first 23 residues, 1–23, serve as a signal peptide directing secretion; that stretch reads MKLCVTVLSLLVLMAAFCSPALS. Intrachain disulfides connect C34-C58 and C35-C74.

Belongs to the intercrine beta (chemokine CC) family. Homodimer. Interacts with CCR5.

Its subcellular location is the secreted. Functionally, monokine with inflammatory and chemokinetic properties. This is C-C motif chemokine 4 (CCL4) from Bos taurus (Bovine).